A 426-amino-acid polypeptide reads, in one-letter code: Serine/threonine-protein kinase ssn3 (426 aa).

Residues 41-368 (YHIVGFISSG…AREALEHPYF (328 aa)) form the Protein kinase domain. ATP contacts are provided by residues 47–55 (ISSGTYGRV) and Lys-71. Catalysis depends on Asp-173, which acts as the Proton acceptor. The interval 390-426 (RVTQDDNDIRSGSLPGTKRSGLPDDSLMGRAAKRLKE) is disordered.

This sequence belongs to the protein kinase superfamily. CMGC Ser/Thr protein kinase family. CDC2/CDKX subfamily. In terms of assembly, component of the srb8-11 complex, a regulatory module of the Mediator complex. The cofactor is Mg(2+).

Its subcellular location is the nucleus. The enzyme catalyses L-seryl-[protein] + ATP = O-phospho-L-seryl-[protein] + ADP + H(+). It catalyses the reaction L-threonyl-[protein] + ATP = O-phospho-L-threonyl-[protein] + ADP + H(+). The catalysed reaction is [DNA-directed RNA polymerase] + ATP = phospho-[DNA-directed RNA polymerase] + ADP + H(+). Its function is as follows. Component of the srb8-11 complex. The srb8-11 complex is a regulatory module of the Mediator complex which is itself dependent transcription. The srb8-11 complex may be involved in the transcriptional repression of a subset of genes regulated by Mediator. It may inhibit the association of the Mediator complex with RNA polymerase II to form the holoenzyme complex. The srb8-11 complex phosphorylates the C-terminal domain (CTD) of the largest subunit of RNA polymerase II. This chain is Serine/threonine-protein kinase ssn3 (ssn3), found in Neosartorya fischeri (strain ATCC 1020 / DSM 3700 / CBS 544.65 / FGSC A1164 / JCM 1740 / NRRL 181 / WB 181) (Aspergillus fischerianus).